The following is a 53-amino-acid chain: UPF0391 membrane protein Bxeno_A1464 (53 aa).

The next 2 helical transmembrane spans lie at 5–25 and 30–50; these read AAIFFIIAIIAAVFGFGGIAA and IAKVLFFIFVVIFLVTLLMGV.

This sequence belongs to the UPF0391 family.

Its subcellular location is the cell membrane. The sequence is that of UPF0391 membrane protein Bxeno_A1464 from Paraburkholderia xenovorans (strain LB400).